The sequence spans 193 residues: 7-methyl-GTP pyrophosphatase (193 aa).

Aspartate 70 serves as the catalytic Proton acceptor.

Belongs to the Maf family. YceF subfamily. The cofactor is a divalent metal cation.

The protein resides in the cytoplasm. The enzyme catalyses N(7)-methyl-GTP + H2O = N(7)-methyl-GMP + diphosphate + H(+). Nucleoside triphosphate pyrophosphatase that hydrolyzes 7-methyl-GTP (m(7)GTP). May have a dual role in cell division arrest and in preventing the incorporation of modified nucleotides into cellular nucleic acids. In Aliivibrio fischeri (strain ATCC 700601 / ES114) (Vibrio fischeri), this protein is 7-methyl-GTP pyrophosphatase.